The chain runs to 110 residues: UPF0060 membrane protein Ajs_2087 (110 aa).

The next 4 membrane-spanning stretches (helical) occupy residues Leu-7–Trp-27, Ser-33–Leu-53, Ala-63–Val-83, and Gly-86–Ala-106.

It belongs to the UPF0060 family.

It is found in the cell inner membrane. The polypeptide is UPF0060 membrane protein Ajs_2087 (Acidovorax sp. (strain JS42)).